The chain runs to 188 residues: dCTP deaminase (188 aa).

Residues 111–116, 135–137, Q156, Y170, and Q180 each bind dCTP; these read KSTYAR and TLE. The Proton donor/acceptor role is filled by E137.

The protein belongs to the dCTP deaminase family. In terms of assembly, homotrimer.

It carries out the reaction dCTP + H2O + H(+) = dUTP + NH4(+). Its pathway is pyrimidine metabolism; dUMP biosynthesis; dUMP from dCTP (dUTP route): step 1/2. In terms of biological role, catalyzes the deamination of dCTP to dUTP. The sequence is that of dCTP deaminase from Acidithiobacillus ferrooxidans (strain ATCC 23270 / DSM 14882 / CIP 104768 / NCIMB 8455) (Ferrobacillus ferrooxidans (strain ATCC 23270)).